The following is a 282-amino-acid chain: Benzoyl-CoA reductase subunit D (282 aa).

Cysteine 130 and cysteine 169 together coordinate [4Fe-4S] cluster.

As to quaternary structure, heterotetramer composed of A, B, C, and D subunits. [4Fe-4S] cluster is required as a cofactor.

It catalyses the reaction cyclohexa-1,5-diene-1-carbonyl-CoA + oxidized 2[4Fe-4S]-[ferredoxin] + 2 ADP + 2 phosphate = reduced 2[4Fe-4S]-[ferredoxin] + benzoyl-CoA + 2 ATP + 2 H2O. The enzyme catalyses 3-hydroxybenzoyl-CoA + AH2 + 2 ATP + 2 H2O = 3-hydroxycyclohexa-1,5-diene-1-carbonyl-CoA + A + 2 ADP + 2 phosphate + 2 H(+). Functionally, catalyzes the anaerobic reduction of benzoyl-CoA and 3-hydroxybenzoyl-CoA to form cyclohexa-1,5-diene-1-carbonyl-CoA and 3-hydroxycyclohexa-1,5-diene-1-carbonyl-CoA, respectively. The enzyme also reduces other benzoyl-CoA analogs with small substituents at the aromatic ring. The sequence is that of Benzoyl-CoA reductase subunit D (bcrD) from Thauera aromatica.